Reading from the N-terminus, the 338-residue chain is MINNRICILGTGAWATALGSRLSLNGNTVFLWGIDNNEVNDINSGYNKKYFGNTKFSSSLSATTDLKTAIGDSKYIIFAIPSTALDSVLDKVKEFLSDKKSQVILINVVKGIDAETSQILSNKIKSKLGSHYYSRLVTLCGPSFATEVFEEKPTVINGTGKNLKIVKQVCELFNSDVFKVIPINDIVGLQVFSSLKNLLAIAVGLSQAEYTSVNTMSAILTMGIEEIQKIACKMKAKKWTIMSFCGIGDIFLTCSSTQSRNYSFGQDLLKKGVEKTIKENKKTVEGFEVYKTAKNIITKYNINAPIFSSIIEVLEGKLDPKEFSKKCLELFWNQKINK.

NADPH-binding residues include Trp-14, Tyr-50, and Lys-110. Positions 110, 141, and 143 each coordinate sn-glycerol 3-phosphate. Ala-145 lines the NADPH pocket. Sn-glycerol 3-phosphate contacts are provided by Lys-196, Asp-249, Ser-259, Arg-260, and Asn-261. Lys-196 (proton acceptor) is an active-site residue. Arg-260 lines the NADPH pocket. Glu-285 provides a ligand contact to NADPH.

This sequence belongs to the NAD-dependent glycerol-3-phosphate dehydrogenase family.

It localises to the cytoplasm. The enzyme catalyses sn-glycerol 3-phosphate + NAD(+) = dihydroxyacetone phosphate + NADH + H(+). The catalysed reaction is sn-glycerol 3-phosphate + NADP(+) = dihydroxyacetone phosphate + NADPH + H(+). Its pathway is membrane lipid metabolism; glycerophospholipid metabolism. Catalyzes the reduction of the glycolytic intermediate dihydroxyacetone phosphate (DHAP) to sn-glycerol 3-phosphate (G3P), the key precursor for phospholipid synthesis. The chain is Glycerol-3-phosphate dehydrogenase [NAD(P)+] from Malacoplasma penetrans (strain HF-2) (Mycoplasma penetrans).